Here is a 512-residue protein sequence, read N- to C-terminus: Cytochrome P450 77A4 (512 aa).

A helical membrane pass occupies residues 9 to 29; that stretch reads PTSLDFTFFAIIISGFVFIIT. Cys456 is a binding site for heme.

It belongs to the cytochrome P450 family. Heme serves as cofactor.

It localises to the membrane. Functionally, catalyzes the epoxidation of physiological unsaturated fatty acids in vitro. Can use laurate, oleate, linoleate, linolenate and vernolate as substrate. This Arabidopsis thaliana (Mouse-ear cress) protein is Cytochrome P450 77A4 (CYP77A4).